The chain runs to 569 residues: Probable santalene synthase (569 aa).

5 residues coordinate (2E)-geranyl diphosphate: Arg284, Asp321, Asp325, Arg460, and Asn463. Mg(2+) contacts are provided by Asp321 and Asp325. A DDXXD motif motif is present at residues 321–325; it reads DDAYD. 3 residues coordinate Mg(2+): Asn463, Thr467, and Glu471.

The protein belongs to the terpene synthase family. Tpsb subfamily. It depends on Mg(2+) as a cofactor. Mn(2+) serves as cofactor.

Catalyzes the formation of santalene. In Santalum murrayanum (Bitter quandong), this protein is Probable santalene synthase (SSY).